The primary structure comprises 393 residues: Acetate kinase (393 aa).

Asn-7 is a binding site for Mg(2+). Lys-14 is a binding site for ATP. Position 87 (Arg-87) interacts with substrate. Catalysis depends on Asp-144, which acts as the Proton donor/acceptor. ATP is bound by residues 202–206 (HIGNG), 277–279 (DLR), and 326–330 (GVGEN). Mg(2+) is bound at residue Glu-380.

The protein belongs to the acetokinase family. In terms of assembly, homodimer. The cofactor is Mg(2+). Mn(2+) serves as cofactor.

The protein resides in the cytoplasm. It carries out the reaction acetate + ATP = acetyl phosphate + ADP. Its pathway is metabolic intermediate biosynthesis; acetyl-CoA biosynthesis; acetyl-CoA from acetate: step 1/2. Its function is as follows. Catalyzes the formation of acetyl phosphate from acetate and ATP. Can also catalyze the reverse reaction. In Mycoplasmopsis pulmonis (strain UAB CTIP) (Mycoplasma pulmonis), this protein is Acetate kinase.